Reading from the N-terminus, the 255-residue chain is MKVKVFNLEGEPVEEIELPKVFSTPFRPDLIRRAVIASWTHRIQPQGRDPQAGKRRVTENIGKGHGMARVERIKTSPRFAAFVPFAVGGRRTHPPKVEKIIWEDINKKERRLAIMSAIAATANYDLVRARGHVVDNVVQIPLVVTDDLQKVFKTAQTREIFKKLGVWDDIERAKKNTKIRAGKGKMRGRRYKKAKGPLIVVAKNEGIVQGARNHPGVDVVTVDNLGVEYLAPGTHPGRLTIWTKGAIERLREIYG.

Belongs to the universal ribosomal protein uL4 family. As to quaternary structure, part of the 50S ribosomal subunit.

Its function is as follows. One of the primary rRNA binding proteins, this protein initially binds near the 5'-end of the 23S rRNA. It is important during the early stages of 50S assembly. It makes multiple contacts with different domains of the 23S rRNA in the assembled 50S subunit and ribosome. Forms part of the polypeptide exit tunnel. The sequence is that of Large ribosomal subunit protein uL4 from Thermococcus kodakarensis (strain ATCC BAA-918 / JCM 12380 / KOD1) (Pyrococcus kodakaraensis (strain KOD1)).